A 236-amino-acid chain; its full sequence is MKIKLLTLAVASLVSVNALAVSIDYRHEMQDTAQAGHKDRLLISHRFANGFGLSSEVKWAQSSADKTPNKPFNEQVSNGTEVVASYVYKFNSVFSIEPGFSLESGSSNNNYRPYLRGRANVTDDLSVALRYRPYFKRNSGNIGKDNTMDKGYTLTGNIDYTFLKDYTIGYELEYKKGTSGKTILSDNDDYDITHNVKLSYKWDKNWKPYVEVGNVSGSETTDERQTRYRVGVQYSF.

The first 20 residues, 1–20 (MKIKLLTLAVASLVSVNALA), serve as a signal peptide directing secretion.

The protein belongs to the oligogalacturonate-specific porin KdgM (TC 1.B.35) family. Monomer.

It localises to the cell outer membrane. Functionally, porin specific for oligogalacturonides. Also required for full virulence. This Dickeya dadantii (strain 3937) (Erwinia chrysanthemi (strain 3937)) protein is Oligogalacturonate-specific porin KdgM (kdgM).